We begin with the raw amino-acid sequence, 695 residues long: Putative ATP-dependent DNA helicase R568 (695 aa).

The region spanning 86 to 499 is the UvrD-like helicase ATP-binding domain; that stretch reads KFSEEQIKYI…FRNEEIFDSN (414 aa). Residue 107-114 participates in ATP binding; sequence ACAGSGKT.

It belongs to the helicase family. UvrD subfamily.

It carries out the reaction Couples ATP hydrolysis with the unwinding of duplex DNA by translocating in the 3'-5' direction.. The enzyme catalyses ATP + H2O = ADP + phosphate + H(+). In terms of biological role, ATP-dependent DNA helicase. This is Putative ATP-dependent DNA helicase R568 from Acanthamoeba polyphaga mimivirus (APMV).